A 425-amino-acid chain; its full sequence is MRNASGFLKTAGAPLVSATWLPPSPPPAMPTVAAGPQMERVDNGSQGAPQLFLTSALARGVSGVFVWTALLLTGHQIYSHLRSYTAPREQRFVIRLLFIVPIYAFDSWLSLLLLGGHPYYVYFDSVRDCYEAFVIYSFLTLCFQYLGGESAIMAEIRGKPIRSSCFYGTCCLRGMSYSITFLRFCKQATLQFCIVKPVMALITIILQAFDKYHDGDFNIHSGYLYVTLVYNASVSLALYALFLFYFATRDLLRPFEPVLKFLTIKAIIFLSFWQGMLLAILERCGVIPEVQAVDGTRVGAGTLAAGYQNFLICVEMLFASLALRYAFPSQVYSEKKNSPVPPAPMQSISSGLKETISPQDIVQDAIHNFSPAYQQYTQQSTHEAPGPGQGGHPAPSTHPGPASGSGGGKKSRNIEKRMLIPSEDL.

Helical transmembrane passes span 51–71 (LFLTSALARGVSGVFVWTALL), 96–116 (LLFIVPIYAFDSWLSLLLLGG), 133–153 (FVIYSFLTLCFQYLGGESAIM), 189–209 (TLQFCIVKPVMALITIILQAF), 226–246 (VTLVYNASVSLALYALFLFYF), 261–281 (FLTIKAIIFLSFWQGMLLAIL), and 303–323 (LAAGYQNFLICVEMLFASLAL). The interval 375–425 (QYTQQSTHEAPGPGQGGHPAPSTHPGPASGSGGGKKSRNIEKRMLIPSEDL) is disordered. Low complexity predominate over residues 392–402 (HPAPSTHPGPA).

This sequence belongs to the TMEM184 family. In terms of tissue distribution, expressed in testis, pancreas, parotid salivary gland and mammary gland (at protein level).

Its subcellular location is the cell membrane. It is found in the cytoplasm. It localises to the perinuclear region. The protein localises to the cytoplasmic vesicle membrane. The protein resides in the early endosome membrane. Its subcellular location is the endosome. It is found in the cytoplasmic vesicle. It localises to the secretory vesicle membrane. Functionally, acts as a heparin receptor in vascular cells. May be involved in vesicle transport in exocrine cells and Sertoli cells. The sequence is that of Transmembrane protein 184A (Tmem184a) from Mus musculus (Mouse).